Consider the following 327-residue polypeptide: Cell surface glycoprotein CD200 receptor 1 (327 aa).

A signal peptide spans 1–23; that stretch reads MLCFWRTSHVAVLLIWGVFAAES. At 24-239 the chain is on the extracellular side; it reads SCPDKNQTMQ…GRGGDQLLGS (216 aa). Residues 26 to 145 form the Ig-like V-type domain; the sequence is PDKNQTMQNN…GNFQNIYDLQ (120 aa). 8 N-linked (GlcNAc...) asparagine glycosylation sites follow: asparagine 29, asparagine 34, asparagine 43, asparagine 96, asparagine 159, asparagine 187, asparagine 192, and asparagine 222. 2 cysteine pairs are disulfide-bonded: cysteine 58-cysteine 129 and cysteine 81-cysteine 97. In terms of domain architecture, Ig-like C2-type spans 147–226; the sequence is LVPPEVTHFP…HLTTGNQSLS (80 aa). 2 cysteine pairs are disulfide-bonded: cysteine 164-cysteine 213 and cysteine 183-cysteine 201. A helical membrane pass occupies residues 240–260; it reads YIQYIIPSIIILIIIGCICLL. The Cytoplasmic segment spans residues 261–327; sequence KISGCRKCKL…DCLTLSAMGI (67 aa).

Belongs to the CD200R family. In terms of assembly, CD200 and CD200R1 interact via their respective N-terminal Ig-like domains. Post-translationally, phosphorylated on tyrosine residues. In terms of processing, highly N-glycosylated. Restricted to cells of the myeloid lineage.

It is found in the cell membrane. In terms of biological role, inhibitory receptor for the CD200/OX2 cell surface glycoprotein. Limits inflammation by inhibiting the expression of pro-inflammatory molecules including TNF-alpha, interferons, and inducible nitric oxide synthase (iNOS) in response to selected stimuli. This is Cell surface glycoprotein CD200 receptor 1 (Cd200r1) from Rattus norvegicus (Rat).